A 474-amino-acid chain; its full sequence is MKTLYSLRRFYPVETLFNGTLAVAGRDQETTGFAWWAGNARLINLSGKLLGAHVAHAGLIVFWAGAMNLFEVAHFVPEKPMYEQGLILLPHLATLGWGVGPGGEVIDTFPYFVSGVLHLISSAVLGFGGIYHALLGPETLEESFPFFGYVWKDRNKMTTILGIHLILLGIGAFLLVFKALYFGGVYDTWAPGGGEMLRKITNLTLSPSVIFGYLLKSFFGGEGWIVSVDDLEDIIGGHVWLGSICIFGGIWHILTKPFAWARRALVWSGEAYLSYSLGALAVFGFIACCFVWFNNTAYPSEFYGPTGPEASQAQAFTFLVRDQRLGANVGSAQGPTGLGKYLMRSPTGEVIFGGETMRFWDLRAPWLEPLRGPNGLDLSRLKKDIQPWQERRSAEYMTHAPLGSLNSVGGVATEINAVNYVSPRTWLSTSHFVLGFFFFVGHLWHAGRARAAAAGFEKGIDRDFEPVLSMTPIN.

Positions 1-14 (MKTLYSLRRFYPVE) are excised as a propeptide. Residue Thr15 is modified to N-acetylthreonine. A Phosphothreonine modification is found at Thr15. A run of 5 helical transmembrane segments spans residues 69 to 93 (LFEV…PHLA), 134 to 155 (LLGP…KDRN), 178 to 201 (KALY…RKIT), 256 to 276 (KPFA…LSYS), and 292 to 313 (WFNN…ASQA). Glu368 is a binding site for [CaMn4O5] cluster. The helical transmembrane segment at 448-472 (RARAAAAGFEKGIDRDFEPVLSMTP) threads the bilayer.

This sequence belongs to the PsbB/PsbC family. PsbC subfamily. As to quaternary structure, PSII is composed of 1 copy each of membrane proteins PsbA, PsbB, PsbC, PsbD, PsbE, PsbF, PsbH, PsbI, PsbJ, PsbK, PsbL, PsbM, PsbT, PsbX, PsbY, PsbZ, Psb30/Ycf12, at least 3 peripheral proteins of the oxygen-evolving complex and a large number of cofactors. It forms dimeric complexes. Requires Binds multiple chlorophylls and provides some of the ligands for the Ca-4Mn-5O cluster of the oxygen-evolving complex. It may also provide a ligand for a Cl- that is required for oxygen evolution. PSII binds additional chlorophylls, carotenoids and specific lipids. as cofactor.

It localises to the plastid. The protein resides in the chloroplast thylakoid membrane. Functionally, one of the components of the core complex of photosystem II (PSII). It binds chlorophyll and helps catalyze the primary light-induced photochemical processes of PSII. PSII is a light-driven water:plastoquinone oxidoreductase, using light energy to abstract electrons from H(2)O, generating O(2) and a proton gradient subsequently used for ATP formation. The chain is Photosystem II CP43 reaction center protein from Citrus sinensis (Sweet orange).